Consider the following 536-residue polypeptide: Phosphoenolpyruvate carboxykinase (ATP) (536 aa).

Positions 62, 203, and 209 each coordinate substrate. Residues K209, H228, and 244 to 252 (GLSGTGKTT) contribute to the ATP site. K209 and H228 together coordinate Mn(2+). Position 265 (D265) interacts with Mn(2+). Residues E293, R329, 445-446 (RI), and T451 contribute to the ATP site. Residue R329 participates in substrate binding.

The protein belongs to the phosphoenolpyruvate carboxykinase (ATP) family. In terms of assembly, monomer. Mn(2+) serves as cofactor.

Its subcellular location is the cytoplasm. It catalyses the reaction oxaloacetate + ATP = phosphoenolpyruvate + ADP + CO2. It participates in carbohydrate biosynthesis; gluconeogenesis. Involved in the gluconeogenesis. Catalyzes the conversion of oxaloacetate (OAA) to phosphoenolpyruvate (PEP) through direct phosphoryl transfer between the nucleoside triphosphate and OAA. The chain is Phosphoenolpyruvate carboxykinase (ATP) from Glaesserella parasuis serovar 5 (strain SH0165) (Haemophilus parasuis).